A 225-amino-acid chain; its full sequence is Large ribosomal subunit protein uL4 (225 aa).

The interval 46-102 is disordered; it reads KRQGTHATKGRGEVRGGGRKPFRQKGTGRARQGSIRAPHFTGGGTVHGPQPRDYSQR. Over residues 62–73 the composition is skewed to basic residues; sequence GGRKPFRQKGTG.

The protein belongs to the universal ribosomal protein uL4 family. Part of the 50S ribosomal subunit.

In terms of biological role, one of the primary rRNA binding proteins, this protein initially binds near the 5'-end of the 23S rRNA. It is important during the early stages of 50S assembly. It makes multiple contacts with different domains of the 23S rRNA in the assembled 50S subunit and ribosome. Forms part of the polypeptide exit tunnel. The protein is Large ribosomal subunit protein uL4 of Corynebacterium urealyticum (strain ATCC 43042 / DSM 7109).